The primary structure comprises 330 residues: Ribosomal RNA small subunit methyltransferase H (330 aa).

S-adenosyl-L-methionine contacts are provided by residues 40–42 (GGY), Asp-58, Phe-85, Asp-101, and Gln-108.

Belongs to the methyltransferase superfamily. RsmH family.

The protein resides in the cytoplasm. The catalysed reaction is cytidine(1402) in 16S rRNA + S-adenosyl-L-methionine = N(4)-methylcytidine(1402) in 16S rRNA + S-adenosyl-L-homocysteine + H(+). In terms of biological role, specifically methylates the N4 position of cytidine in position 1402 (C1402) of 16S rRNA. The chain is Ribosomal RNA small subunit methyltransferase H from Roseobacter denitrificans (strain ATCC 33942 / OCh 114) (Erythrobacter sp. (strain OCh 114)).